We begin with the raw amino-acid sequence, 310 residues long: GTP-binding protein GTR1 (310 aa).

11 residues coordinate GTP: S15, G18, K19, S20, S21, T35, T41, G64, H126, D129, and I166.

Belongs to the GTR/RAG GTP-binding protein family. Heterodimer; with GTR2. Component of the GSE complex composed of GTR1, GTR2, SLM4, MEH1 and LTV1. Interacts with GTR2; the interaction is direct. Interacts with TOR1.

It localises to the vacuole membrane. The enzyme catalyses GTP + H2O = GDP + phosphate + H(+). GTPase involved in activation of the TORC1 signaling pathway, which promotes growth and represses autophagy in nutrient-rich conditions. Also required for TORC1 inactivation during nitrogen starvation. Required for intracellular sorting of GAP1 out of the endosome. Functionally associated with the inorganic phosphate transporter PHO84, and may be involved in regulating its function or localization. The protein is GTP-binding protein GTR1 (GTR1) of Saccharomyces cerevisiae (strain ATCC 204508 / S288c) (Baker's yeast).